Here is a 146-residue protein sequence, read N- to C-terminus: UPF0742 protein PB2B2.17c (146 aa).

Residues 38–60 (LTVKYCLAVKLLIYLLYCWYIYS) traverse the membrane as a helical segment.

It belongs to the UPF0742 family.

It is found in the cytoplasm. The protein localises to the nucleus membrane. In Schizosaccharomyces pombe (strain 972 / ATCC 24843) (Fission yeast), this protein is UPF0742 protein PB2B2.17c.